The following is a 721-amino-acid chain: Polyribonucleotide nucleotidyltransferase (721 aa).

2 residues coordinate Mg(2+): Asp-495 and Asp-501. The KH domain occupies 562 to 621 (PRLLSFRIDPELIGTVIGPGGRTIKGITERTNTKIDIEDGGIVTIASHDGAAAEEAQKII). An S1 motif domain is found at 631–699 (GEIFTGVVTR…SRGRINLTLR (69 aa)). Residues 702–721 (SQNSGMSYPEPTPTPVAPLN) form a disordered region. Residues 711-721 (EPTPTPVAPLN) are compositionally biased toward pro residues.

The protein belongs to the polyribonucleotide nucleotidyltransferase family. The cofactor is Mg(2+).

It is found in the cytoplasm. It carries out the reaction RNA(n+1) + phosphate = RNA(n) + a ribonucleoside 5'-diphosphate. Functionally, involved in mRNA degradation. Catalyzes the phosphorolysis of single-stranded polyribonucleotides processively in the 3'- to 5'-direction. This Prochlorococcus marinus (strain MIT 9312) protein is Polyribonucleotide nucleotidyltransferase.